We begin with the raw amino-acid sequence, 220 residues long: Protein ABA DEFICIENT 4, chloroplastic (220 aa).

The N-terminal 37 residues, 1–37 (MGFSSFISQPLSSSLSVMKRNVSAKRSELCLDSSKIR), are a transit peptide targeting the chloroplast. Transmembrane regions (helical) follow at residues 77–97 (IASS…TLMV), 112–132 (SVPY…SWTP), 154–174 (MFSS…VDLF), and 195–215 (SLCL…KAII).

As to expression, expressed in root vasculature, root hairs, leaves, trichomes, sepals, stamens, stigma, pedicels, siliques and embryo.

It is found in the plastid. It localises to the chloroplast membrane. Its function is as follows. Required for neoxanthin biosynthesis, an intermediary step in abscisic acid (ABA) biosynthesis. Probably not involved directly in the enzymatic conversion of violaxanthin to neoxanthin. Cannot convert violaxanthin to neoxanthin in vitro. Required for ABA biosynthesis in response to drought stress. Required for neoxanthin biosynthesis which is involved in photoprotection of photosystem II (PSII). Neoxanthin acts as an antioxidant within the photosystem PSII supercomplex. This is Protein ABA DEFICIENT 4, chloroplastic from Arabidopsis thaliana (Mouse-ear cress).